The chain runs to 295 residues: UDP-N-acetylenolpyruvoylglucosamine reductase (295 aa).

The FAD-binding PCMH-type domain occupies lysine 24–glycine 188. Residue arginine 168 is part of the active site. The active-site Proton donor is serine 217. Glutamate 287 is a catalytic residue.

The protein belongs to the MurB family. Requires FAD as cofactor.

The protein localises to the cytoplasm. It carries out the reaction UDP-N-acetyl-alpha-D-muramate + NADP(+) = UDP-N-acetyl-3-O-(1-carboxyvinyl)-alpha-D-glucosamine + NADPH + H(+). The protein operates within cell wall biogenesis; peptidoglycan biosynthesis. Cell wall formation. The sequence is that of UDP-N-acetylenolpyruvoylglucosamine reductase from Rickettsia rickettsii (strain Iowa).